The following is a 151-amino-acid chain: Putative phosphatidylglycerol/phosphatidylinositol transfer protein 1 (151 aa).

The N-terminal stretch at 1-26 is a signal peptide; sequence MKHSKNQIVYITFFIIILIVVKPIES.

Belongs to the NPC2 family. In terms of assembly, monomer.

Catalyzes the intermembrane transfer of phosphatidylglycerol and phosphatidylinositol. This chain is Putative phosphatidylglycerol/phosphatidylinositol transfer protein 1, found in Dictyostelium discoideum (Social amoeba).